Consider the following 307-residue polypeptide: Ribosomal RNA small subunit methyltransferase H (307 aa).

Residues 38–40 (GGH), D58, F82, D99, and Q106 each bind S-adenosyl-L-methionine.

It belongs to the methyltransferase superfamily. RsmH family.

It is found in the cytoplasm. It catalyses the reaction cytidine(1402) in 16S rRNA + S-adenosyl-L-methionine = N(4)-methylcytidine(1402) in 16S rRNA + S-adenosyl-L-homocysteine + H(+). Functionally, specifically methylates the N4 position of cytidine in position 1402 (C1402) of 16S rRNA. This Variovorax paradoxus (strain S110) protein is Ribosomal RNA small subunit methyltransferase H.